We begin with the raw amino-acid sequence, 469 residues long: 6-phospho-beta-galactosidase (469 aa).

D-galactose 6-phosphate contacts are provided by Gln18, His115, Asn158, Glu159, and Asn296. The active-site Proton donor is Glu159. The active-site Nucleophile is the Glu374. D-galactose 6-phosphate is bound by residues Ser429, Trp430, Lys436, and Tyr438.

The protein belongs to the glycosyl hydrolase 1 family.

The catalysed reaction is a 6-phospho-beta-D-galactoside + H2O = D-galactose 6-phosphate + an alcohol. It functions in the pathway carbohydrate metabolism; lactose degradation; D-galactose 6-phosphate and beta-D-glucose from lactose 6-phosphate: step 1/1. In Staphylococcus haemolyticus (strain JCSC1435), this protein is 6-phospho-beta-galactosidase.